Reading from the N-terminus, the 149-residue chain is Large ribosomal subunit protein uL13 (149 aa).

It belongs to the universal ribosomal protein uL13 family. In terms of assembly, part of the 50S ribosomal subunit.

This protein is one of the early assembly proteins of the 50S ribosomal subunit, although it is not seen to bind rRNA by itself. It is important during the early stages of 50S assembly. The chain is Large ribosomal subunit protein uL13 from Bifidobacterium longum subsp. infantis (strain ATCC 15697 / DSM 20088 / JCM 1222 / NCTC 11817 / S12).